A 1097-amino-acid polypeptide reads, in one-letter code: MSSSALQVAKTATYLPDLVEVQRASFKWFLEKGLIEELQNFSPISDYTGKLELHFIGEEYRLKRPRHDVEEAKRRDATFASQMYVTCRLINKETGEIKEQEVFIGELPLMTERGTFIINGAERVIVNQIVRSPGVYFKDELDKNGRRTYNASVIPNRGAWLKFETDKNNLLYVRVDKTRKINAHVLMRAMGLSDNDVVDKLRHPEFYQSSIESANDEGINSEDQALLELYKKLRPGEPPSVSGGQQLLHSRFFDPKRYDLGRVGRYKINKKLRLTVPDNVRTLTHEDVLSTIDYLINLELDIGGASLDDIDHLGNRRVRSVGELLQNQVRVGLNRLERIIKERMTVGETDSLTPAQLVNPKPLVAAIKEFFGSSQLSQFMDQTNPLAELTHKRRISALGPGGLTRERAGFAVRDIHPSHYGRLCPIETPEGPNAGLINSLATHARVNEYGFIETPFWEVKNGKVDKEGNPVYLSADLEDECRVAPGDVATDKDGNIIANLIPVRYRQDFEKVPPHQVDYVQLSPVQVISVATSLIPFLEHDDANRALMGSNMQRQAVPLLRPERPLVGTGLESQVARDSGMVPITKVNGTVSYVDANEIVVKDEDGNEHFHYLQKYQRSNQDTCLNQRPIVKIGDRVISGQVLADGSACEGGEIALGQNVLIAYMPWEGYNYEDAILVSERMVTDDLYTSVHIEKYEIEARQTKLGPEEITREIPNISEESLNNLDEMGIIRIGAFVESGDILVGKVTPKGESDQPPEEKLLRAIFGEKARDVRDNSLRVPKTEKGRVLDVRIYTREQGDELPPGANMVVRVYVAQRRKIQVGDKMAGRHGNKGIISRILPREDMPYLPDGTPVDIVLNPLGVPSRMNVGQVFELLMGWAAANLNCRVKVVPFDEMYGAEKSHQTVQAFLEEASKQPGKAWVYNPDDPGKLLLKDGRTGEPFDQPVAVGYSHFLKLVHLVDDKIHARSTGPYSLVTQQPLGGKAQQGGQRLGEMEVWALEAYGAAYTLQELLTVKSDDMQGRNEALNAIVKGKPIPRPGTPESFKVLMRELQSLGLDIGVYTDEGKEVDLMQDINPRRNTPSRPTYESLGTSEYEED.

The disordered stretch occupies residues 1072–1097; that stretch reads QDINPRRNTPSRPTYESLGTSEYEED. The segment covering 1077–1091 has biased composition (polar residues); that stretch reads RRNTPSRPTYESLGT.

It belongs to the RNA polymerase beta chain family. In terms of assembly, in cyanobacteria the RNAP catalytic core is composed of 2 alpha, 1 beta, 1 beta', 1 gamma and 1 omega subunit. When a sigma factor is associated with the core the holoenzyme is formed, which can initiate transcription.

It carries out the reaction RNA(n) + a ribonucleoside 5'-triphosphate = RNA(n+1) + diphosphate. Functionally, DNA-dependent RNA polymerase catalyzes the transcription of DNA into RNA using the four ribonucleoside triphosphates as substrates. This Prochlorococcus marinus (strain MIT 9301) protein is DNA-directed RNA polymerase subunit beta.